A 239-amino-acid chain; its full sequence is MPRKRKCDLRAVRVGLLLGGGGVYGSRFRFTFPGCRALSPWRVRVQRRRCEMSTMFADTLLIVFISVCTALLAEGITWVLVYRTDKYKRLKAEVEKQSKKLEKKKETITESAGRQQKKKIERQEEKLKNNNRDLSMVRMKSMFAIGFCFTALMGMFNSIFDGRVVAKLPFTPLSYIQGLSHRNLLGDDTTDCSFIFLYILCTMSIRQNIQKILGLAPSRAATKQAGGFLGPPPPSGKFS.

Over M1–M55 the chain is Lumenal. Residues F56–R83 traverse the membrane as a helical segment. Residues R83–K140 adopt a coiled-coil conformation. Over T84–V137 the chain is Cytoplasmic. S111 carries the post-translational modification Phosphoserine. Residues R138–N157 traverse the membrane as a helical segment. Residues S158–T171 lie on the Lumenal side of the membrane. Residues P172–H181 lie within the membrane without spanning it. At R182–D191 the chain is on the lumenal side. The helical transmembrane segment at C192–L213 threads the bilayer. At G214 to S239 the chain is on the cytoplasmic side. The residue at position 239 (S239) is a Phosphoserine.

It belongs to the TMCO1 family. Homodimer and homotetramer. Homodimer under resting conditions; forms homotetramers following ER calcium overload. Component of the GET- and EMC-like (GEL) complex, composed of RAB5IF/OPTI and TMCO1. The GEL complex is part of the multi-pass translocon (MPT) complex, composed of three subcomplexes, the GEL complex (composed of RAB5IF/OPTI and TMCO1), the BOS complex (composed of NCLN/Nicalin, NOMO and TMEM147) and the PAT complex (composed of WDR83OS/Asterix and CCDC47). The MPT complex associates with the SEC61 complex. Widely expressed in adult and fetal tissues, with higher levels in thymus, prostate, testis and small intestine and lower levels in brain, placenta, lung and kidney. Present in most tissues in the eye, including the trabecular meshwork and retina (at protein level).

The protein localises to the endoplasmic reticulum membrane. Its subcellular location is the golgi apparatus membrane. The protein resides in the mitochondrion membrane. It carries out the reaction Ca(2+)(in) = Ca(2+)(out). Its function is as follows. Endoplasmic reticulum (ER) calcium-selective channel preventing intracellular Ca2(+) stores from overfilling and maintaining calcium homeostasis in the ER. In response to endoplasmic reticulum (ER) Ca2(+) overloading, assembles into a homotetramer, forming a functional calcium-selective channel facilitating Ca2(+) release. Mediates ER Ca2(+) homeostasis in osteoblasts and plays a key role in bone formation, via the CaMKII-HDAC4-RUNX2 signaling axis. Component of the multi-pass translocon (MPT) complex that mediates insertion of multi-pass membrane proteins into the lipid bilayer of membranes. The MPT complex takes over after the SEC61 complex: following membrane insertion of the first few transmembrane segments of proteins by the SEC61 complex, the MPT complex occludes the lateral gate of the SEC61 complex to promote insertion of subsequent transmembrane regions. Within the MPT complex, the GEL subcomplex may mediate insertion of transmembrane regions into the membrane. This is Calcium load-activated calcium channel from Homo sapiens (Human).